Here is a 933-residue protein sequence, read N- to C-terminus: Bifunctional uridylyltransferase/uridylyl-removing enzyme (933 aa).

The segment at 1-379 (MAKISLKLDE…TFQRRKRKLA (379 aa)) is uridylyltransferase. The uridylyl-removing stretch occupies residues 380 to 736 (GTSDFIVDNH…VKTHQFEAVT (357 aa)). The 124-residue stretch at 496–619 (VDEHLIRCIG…VQSVERLKLL (124 aa)) folds into the HD domain. ACT domains are found at residues 737-818 (EITV…EMIE) and 848-922 (VIEV…GIAP).

Belongs to the GlnD family. Mg(2+) is required as a cofactor.

The enzyme catalyses [protein-PII]-L-tyrosine + UTP = [protein-PII]-uridylyl-L-tyrosine + diphosphate. It catalyses the reaction [protein-PII]-uridylyl-L-tyrosine + H2O = [protein-PII]-L-tyrosine + UMP + H(+). Uridylyltransferase (UTase) activity is inhibited by glutamine, while glutamine activates uridylyl-removing (UR) activity. Its function is as follows. Modifies, by uridylylation and deuridylylation, the PII regulatory proteins (GlnB and homologs), in response to the nitrogen status of the cell that GlnD senses through the glutamine level. Under low glutamine levels, catalyzes the conversion of the PII proteins and UTP to PII-UMP and PPi, while under higher glutamine levels, GlnD hydrolyzes PII-UMP to PII and UMP (deuridylylation). Thus, controls uridylylation state and activity of the PII proteins, and plays an important role in the regulation of nitrogen fixation and metabolism. The polypeptide is Bifunctional uridylyltransferase/uridylyl-removing enzyme (Mesorhizobium japonicum (strain LMG 29417 / CECT 9101 / MAFF 303099) (Mesorhizobium loti (strain MAFF 303099))).